Here is a 129-residue protein sequence, read N- to C-terminus: Fluoride-specific ion channel FluC 2 (129 aa).

The next 4 helical transmembrane spans lie at phenylalanine 3 to tryptophan 23, alanine 32 to alanine 52, leucine 59 to phenylalanine 79, and glycine 90 to valine 110. Glycine 71 and threonine 74 together coordinate Na(+).

The protein belongs to the fluoride channel Fluc/FEX (TC 1.A.43) family.

It localises to the cell membrane. It carries out the reaction fluoride(in) = fluoride(out). Na(+) is not transported, but it plays an essential structural role and its presence is essential for fluoride channel function. Its function is as follows. Fluoride-specific ion channel. Important for reducing fluoride concentration in the cell, thus reducing its toxicity. This is Fluoride-specific ion channel FluC 2 from Listeria monocytogenes serovar 1/2a (strain ATCC BAA-679 / EGD-e).